The sequence spans 213 residues: Large ribosomal subunit protein uL1 (213 aa).

The protein belongs to the universal ribosomal protein uL1 family. Part of the 50S ribosomal subunit.

In terms of biological role, binds directly to 23S rRNA. Probably involved in E site tRNA release. Its function is as follows. Protein L1 is also a translational repressor protein, it controls the translation of its operon by binding to its mRNA. The chain is Large ribosomal subunit protein uL1 from Nanoarchaeum equitans (strain Kin4-M).